The chain runs to 65 residues: Carboxypeptidase A inhibitor (65 aa).

This sequence belongs to the protease inhibitor I44 family.

Its subcellular location is the secreted. Functionally, inhibits carboxypeptidase A. This is Carboxypeptidase A inhibitor from Ascaris suum (Pig roundworm).